The following is a 527-amino-acid chain: Amine oxidase [flavin-containing] A (527 aa).

Methionine 1 carries the post-translational modification N-acetylmethionine. Residues 1-497 lie on the Cytoplasmic side of the membrane; sequence MASQEKASMA…HSFWERNLPS (497 aa). Phosphoserine is present on serine 383. Cysteine 406 carries the S-8alpha-FAD cysteine modification. Residues 498–518 traverse the membrane as a helical; Anchor for type IV membrane protein segment; it reads VGGLLKIIGFSTSITALWIVV. Topologically, residues 519 to 527 are mitochondrial intermembrane; the sequence is YKFKLLTRS. The interval 520–522 is interaction with membrane phospholipid headgroups; it reads KFK.

Belongs to the flavin monoamine oxidase family. In terms of assembly, monomer, homo- or heterodimer (containing two subunits of similar size). Each subunit contains a covalently bound flavin. Enzymatically active as monomer. It depends on FAD as a cofactor.

The protein localises to the mitochondrion outer membrane. It catalyses the reaction a secondary aliphatic amine + O2 + H2O = a primary amine + an aldehyde + H2O2. The catalysed reaction is a primary methyl amine + O2 + H2O = an aldehyde + H2O2 + NH4(+). The enzyme catalyses (R)-adrenaline + O2 + H2O = (R)-3,4-dihydroxymandelaldehyde + methylamine + H2O2. It carries out the reaction dopamine + O2 + H2O = 3,4-dihydroxyphenylacetaldehyde + H2O2 + NH4(+). It catalyses the reaction tyramine + O2 + H2O = (4-hydroxyphenyl)acetaldehyde + H2O2 + NH4(+). The catalysed reaction is (R)-noradrenaline + O2 + H2O = (R)-3,4-dihydroxymandelaldehyde + H2O2 + NH4(+). The enzyme catalyses serotonin + O2 + H2O = (5-hydroxyindol-3-yl)acetaldehyde + H2O2 + NH4(+). It carries out the reaction kynuramine + O2 + H2O = 3-(2-aminophenyl)-3-oxopropanal + H2O2 + NH4(+). It catalyses the reaction tryptamine + O2 + H2O = indole-3-acetaldehyde + H2O2 + NH4(+). The catalysed reaction is 2-phenylethylamine + O2 + H2O = 2-phenylacetaldehyde + H2O2 + NH4(+). Catalyzes the oxidative deamination of primary and some secondary amine such as neurotransmitters, with concomitant reduction of oxygen to hydrogen peroxide and has important functions in the metabolism of neuroactive and vasoactive amines in the central nervous system and peripheral tissues. Preferentially oxidizes serotonin. Also catalyzes the oxidative deamination of kynuramine to 3-(2-aminophenyl)-3-oxopropanal that can spontaneously condense to 4-hydroxyquinoline. The sequence is that of Amine oxidase [flavin-containing] A from Equus caballus (Horse).